Consider the following 341-residue polypeptide: Alpha-1,4-N-acetylglucosaminyltransferase (341 aa).

Over 1–4 the chain is Cytoplasmic; the sequence is MLKE. The helical; Signal-anchor for type II membrane protein transmembrane segment at 5–25 threads the bilayer; it reads IYLSLSLVLVFACGLLYQLTM. The Lumenal segment spans residues 26 to 341; that stretch reads RSQCFFACLP…VSKKPGTGSR (316 aa). Asn100 is a glycosylation site (N-linked (GlcNAc...) asparagine). A DXD motif motif is present at residues 168-170; that stretch reads DTD.

This sequence belongs to the glycosyltransferase 32 family.

Its subcellular location is the golgi apparatus membrane. Its pathway is protein modification; protein glycosylation. Its function is as follows. Catalyzes the transfer of N-acetylglucosamine (GlcNAc) to core 2 branched O-glycans. Necessary for the synthesis of type III mucin which is specifically produced in the stomach, duodenum, and pancreatic duct. May protect against inflammation-associated gastric adenocarcinoma. This chain is Alpha-1,4-N-acetylglucosaminyltransferase, found in Mus musculus (Mouse).